A 756-amino-acid polypeptide reads, in one-letter code: DNA mismatch repair protein Mlh1 (756 aa).

Ser2 is subject to N-acetylserine. At Lys33 the chain carries N6-acetyllysine. Residues Asn38, Asp63, 82–84 (TSK), and 100–104 (RGEAL) contribute to the ATP site. N6-acetyllysine occurs at positions 241 and 361. 2 disordered regions span residues 355-378 (PSGE…SDKV) and 400-491 (LSKP…KEMT). Positions 362–375 (STTSLTSSSTSGSS) are enriched in low complexity. Lys377 bears the N6-acetyllysine mark. Residues 410 to 650 (AIVTEDKTDI…LLIDNYVPPL (241 aa)) are interaction with EXO1. Residues 443–457 (KNQSLEGDTTKGTSE) are compositionally biased toward polar residues. The Nuclear localization signal motif lies at 471-474 (KRHR). Ser477 carries the post-translational modification Phosphoserine.

The protein belongs to the DNA mismatch repair MutL/HexB family. In terms of assembly, component of the DNA mismatch repair (MMR) complex composed at least of MSH2, MSH3, MSH6, PMS1 and MLH1. Heterodimer of MLH1 and PMS2 (MutL alpha), MLH1 and PMS1 (MutL beta) or MLH1 and MLH3 (MutL gamma). Forms a ternary complex with MutS alpha (MSH2-MSH6) or MutS beta (MSH2-MSH3). Part of the BRCA1-associated genome surveillance complex (BASC), which contains BRCA1, MSH2, MSH6, MLH1, ATM, BLM, PMS2 and the RAD50-MRE11-NBS1 protein complex. This association could be a dynamic process changing throughout the cell cycle and within subnuclear domains. Interacts with MCM9; the interaction recruits MLH1 to chromatin. Interacts with MCM8. Interacts with PMS2; this interaction promotes MLH1 stability. Interacts with MBD4. Interacts with EXO1. Interacts with MTMR15/FAN1. In terms of processing, acetylated. Deacetylated by HDAC6 which prevents the MutL alpha complex, formed by the MLH1-PMS2 heterodimer, from being recruited to the MutS alpha complex, formed by the MSH2-MSH6 heterodimer, leading to tolerance of DNA damage. Post-translationally, ubiquitinated by UBR4; leading to proteasomal degradation. This ubiquitination is counteracted by the deubiquitinase USP5. As to expression, colon, lymphocytes, breast, lung, spleen, testis, prostate, thyroid, gall bladder and heart.

The protein resides in the nucleus. The protein localises to the chromosome. Heterodimerizes with PMS2 to form MutL alpha, a component of the post-replicative DNA mismatch repair system (MMR). DNA repair is initiated by MutS alpha (MSH2-MSH6) or MutS beta (MSH2-MSH3) binding to a dsDNA mismatch, then MutL alpha is recruited to the heteroduplex. Assembly of the MutL-MutS-heteroduplex ternary complex in presence of RFC and PCNA is sufficient to activate endonuclease activity of PMS2. It introduces single-strand breaks near the mismatch and thus generates new entry points for the exonuclease EXO1 to degrade the strand containing the mismatch. DNA methylation would prevent cleavage and therefore assure that only the newly mutated DNA strand is going to be corrected. MutL alpha (MLH1-PMS2) interacts physically with the clamp loader subunits of DNA polymerase III, suggesting that it may play a role to recruit the DNA polymerase III to the site of the MMR. Also implicated in DNA damage signaling, a process which induces cell cycle arrest and can lead to apoptosis in case of major DNA damages. Heterodimerizes with MLH3 to form MutL gamma which plays a role in meiosis. The chain is DNA mismatch repair protein Mlh1 (MLH1) from Homo sapiens (Human).